We begin with the raw amino-acid sequence, 770 residues long: Glutamate carboxypeptidase 2 homolog (770 aa).

The Cytoplasmic segment spans residues 1-19; the sequence is MPYVGVGAQKASTNLTGGP. The helical; Signal-anchor for type II membrane protein transmembrane segment at 20–40 threads the bilayer; that stretch reads MMKAYAFVLAFFLLGLGVLAL. The Extracellular portion of the chain corresponds to 41 to 770; that stretch reads GKHHSGRRFN…CVVNTLRDVI (730 aa). N-linked (GlcNAc...) asparagine glycans are attached at residues Asn175 and Asn337. The catalytic stretch occupies residues 282–597; it reads SKKELFKGRT…QYWAELAKTF (316 aa). Zn(2+) contacts are provided by His387 and Asp397. N-linked (GlcNAc...) asparagine glycosylation occurs at Asn417. Catalysis depends on Glu435, which acts as the Nucleophile. Residues Glu436 and Asp464 each contribute to the Zn(2+) site. Asn469 and Asn551 each carry an N-linked (GlcNAc...) asparagine glycan. His562 lines the Zn(2+) pocket. Asn606 and Asn630 each carry an N-linked (GlcNAc...) asparagine glycan.

This sequence belongs to the peptidase M28 family. M28B subfamily. It depends on Zn(2+) as a cofactor.

It is found in the membrane. It carries out the reaction Release of an unsubstituted, C-terminal glutamyl residue, typically from Ac-Asp-Glu or folylpoly-gamma-glutamates.. In Caenorhabditis briggsae, this protein is Glutamate carboxypeptidase 2 homolog.